The chain runs to 586 residues: Non-structural glycoprotein GNS (586 aa).

A signal peptide spans 1–14; sequence MFLQLFNIVLIYGV. Residues 15–544 lie on the Extracellular side of the membrane; it reads RTSQSTWINY…QNKEYWNEES (530 aa). N-linked (GlcNAc...) asparagine; by host glycans are attached at residues Asn-27, Asn-68, Asn-274, Asn-350, Asn-383, Asn-476, Asn-501, and Asn-521. Residues 545–562 form a helical membrane-spanning segment; the sequence is SIWGISTIITVLGIYYIY. The Cytoplasmic portion of the chain corresponds to 563–586; sequence RKNRREKIFLNMKHRVQRFFKLDY.

Belongs to the ephemerovirus glycoprotein family.

It localises to the host membrane. This chain is Non-structural glycoprotein GNS (GNS), found in Bos taurus (Bovine).